The primary structure comprises 442 residues: Proline--tRNA ligase (442 aa).

Belongs to the class-II aminoacyl-tRNA synthetase family. ProS type 2 subfamily. In terms of assembly, homodimer.

Its subcellular location is the cytoplasm. The catalysed reaction is tRNA(Pro) + L-proline + ATP = L-prolyl-tRNA(Pro) + AMP + diphosphate. In terms of biological role, catalyzes the attachment of proline to tRNA(Pro) in a two-step reaction: proline is first activated by ATP to form Pro-AMP and then transferred to the acceptor end of tRNA(Pro). The polypeptide is Proline--tRNA ligase (Sinorhizobium medicae (strain WSM419) (Ensifer medicae)).